A 635-amino-acid chain; its full sequence is Protein OPG056 (635 aa).

This sequence belongs to the orthopoxvirus OPG056 family. As to quaternary structure, interacts with protein OPG164. Interacts with protein OPG064.

The protein localises to the virion membrane. It is found in the host endosome. Functionally, plays a role in intracellular enveloped virus (IEV) transport to the cell surface through microtubule transport. Together with protein OPG064, forms a complex that interacts with host KLC2 (kinesin light chain isoform 2) to engage the kinesin-1 complex and thereby promote IEV trafficking. The polypeptide is Protein OPG056 (OPG056) (Homo sapiens (Human)).